The chain runs to 172 residues: Adenine phosphoribosyltransferase (172 aa).

This sequence belongs to the purine/pyrimidine phosphoribosyltransferase family. Homodimer.

It localises to the cytoplasm. The catalysed reaction is AMP + diphosphate = 5-phospho-alpha-D-ribose 1-diphosphate + adenine. It participates in purine metabolism; AMP biosynthesis via salvage pathway; AMP from adenine: step 1/1. Catalyzes a salvage reaction resulting in the formation of AMP, that is energically less costly than de novo synthesis. The protein is Adenine phosphoribosyltransferase of Clostridium novyi (strain NT).